Reading from the N-terminus, the 246-residue chain is NAD(P)H-hydrate epimerase (246 aa).

One can recognise a YjeF N-terminal domain in the interval 12-234 (AAEIDKELMG…DFANKFGFEP (223 aa)). (6S)-NADPHX is bound at residue 69 to 73 (NNGGD). Positions 70 and 138 each coordinate K(+). (6S)-NADPHX is bound by residues 142 to 148 (GFSFKPP) and D173. T176 provides a ligand contact to K(+).

The protein belongs to the NnrE/AIBP family. K(+) is required as a cofactor.

The protein resides in the cytoplasm. Its subcellular location is the mitochondrion. It carries out the reaction (6R)-NADHX = (6S)-NADHX. The enzyme catalyses (6R)-NADPHX = (6S)-NADPHX. Functionally, catalyzes the epimerization of the S- and R-forms of NAD(P)HX, a damaged form of NAD(P)H that is a result of enzymatic or heat-dependent hydration. This is a prerequisite for the S-specific NAD(P)H-hydrate dehydratase to allow the repair of both epimers of NAD(P)HX. The chain is NAD(P)H-hydrate epimerase from Saccharomyces cerevisiae (strain ATCC 204508 / S288c) (Baker's yeast).